Reading from the N-terminus, the 369-residue chain is Dual-specificity RNA methyltransferase RlmN (369 aa).

Glu96 acts as the Proton acceptor in catalysis. The 237-residue stretch at 102–338 (DGERGTLCVS…VTTIRTTRGD (237 aa)) folds into the Radical SAM core domain. A disulfide bridge connects residues Cys109 and Cys344. Cys116, Cys120, and Cys123 together coordinate [4Fe-4S] cluster. Residues 169 to 170 (GE), Ser201, 223 to 225 (SLH), and Asn301 each bind S-adenosyl-L-methionine. Cys344 acts as the S-methylcysteine intermediate in catalysis.

It belongs to the radical SAM superfamily. RlmN family. [4Fe-4S] cluster is required as a cofactor.

The protein localises to the cytoplasm. It catalyses the reaction adenosine(2503) in 23S rRNA + 2 reduced [2Fe-2S]-[ferredoxin] + 2 S-adenosyl-L-methionine = 2-methyladenosine(2503) in 23S rRNA + 5'-deoxyadenosine + L-methionine + 2 oxidized [2Fe-2S]-[ferredoxin] + S-adenosyl-L-homocysteine. The catalysed reaction is adenosine(37) in tRNA + 2 reduced [2Fe-2S]-[ferredoxin] + 2 S-adenosyl-L-methionine = 2-methyladenosine(37) in tRNA + 5'-deoxyadenosine + L-methionine + 2 oxidized [2Fe-2S]-[ferredoxin] + S-adenosyl-L-homocysteine. Its function is as follows. Specifically methylates position 2 of adenine 2503 in 23S rRNA and position 2 of adenine 37 in tRNAs. m2A2503 modification seems to play a crucial role in the proofreading step occurring at the peptidyl transferase center and thus would serve to optimize ribosomal fidelity. The polypeptide is Dual-specificity RNA methyltransferase RlmN (Marinobacter nauticus (strain ATCC 700491 / DSM 11845 / VT8) (Marinobacter aquaeolei)).